The primary structure comprises 255 residues: Propionicin-F (255 aa).

2 propeptides span residues 1-101 and 145-255; these read MNTK…RVSC and GTPT…DETV.

The protein localises to the secreted. Functionally, bacteriocin with specific antibacterial activity against strains of P.freudenreichii. No antibacterial activity was detected against P.acidipropionici, P.jensenii and P.thoenii. This chain is Propionicin-F, found in Propionibacterium freudenreichii subsp. freudenreichii.